The chain runs to 392 residues: Basic salivary proline-rich protein 1 (392 aa).

A signal peptide spans Met1 to Ala16. Residue Gln17 is modified to Pyrrolidone carboxylic acid. A compositionally biased stretch (polar residues) spans Leu19–Ser28. Positions Leu19–Gln392 are disordered. Positions Gly34–Pro47 are enriched in low complexity. Ser40 carries the post-translational modification Phosphoserine; alternate. Ser40 is a glycosylation site (O-linked (Hex) serine; alternate). Over residues Gln48 to Gln83 the composition is skewed to pro residues. 15 tandem repeats follow at residues Pro53 to Pro72, Pro73 to Ser92, Pro93 to Pro112, Pro114 to Pro133, Pro134 to Ser153, Pro154 to Pro173, Pro175 to Pro194, Pro195 to Ser214, Pro215 to Pro234, Pro236 to Pro255, Pro256 to Ser275, Pro276 to Pro295, Pro297 to Pro316, Pro317 to Arg336, and Pro338 to Pro357. A 15 X 20 AA approximate tandem repeats of P-P-G-K-P-Q-G-P-P-[PAQ]-Q-[GE]-[GD]-[NKS]-[KSQRN]-[PRQS]-[QS] [GPS]-[PQAR]-[PSR] region spans residues Pro53 to Pro357. O-linked (HexNAc...) serine glycosylation occurs at Ser87. A compositionally biased stretch (pro residues) spans Arg91–Gln144. Residue Ser92 is modified to Phosphoserine. Phosphoserine; alternate is present on Ser150. Residue Ser150 is glycosylated (O-linked (Hex) serine; alternate). Composition is skewed to pro residues over residues Arg152–Gln205, Arg213–Pro243, Gln252–Gln266, and Gln274–Pro324. The segment covering Pro325–Ser334 has biased composition (low complexity). O-linked (HexNAc...) serine glycosylation occurs at Ser330. The segment covering Gln354–Gln392 has biased composition (pro residues).

In terms of processing, O-glycosylated. O-glycosylation on Ser-87 is prevalent in head and neck cancer patients. O-Glycosylation on Ser-330 has a 5 times prevalence in head and neck cancers. Post-translationally, proteolytically cleaved at the tripeptide Xaa-Pro-Gln, where Xaa in the P(3) position is mostly lysine. The endoprotease may be of microbial origin. Pyroglutamate formation occurs on terminal Gln residues of cleaved peptides. Besides on the N-terminal of mature PBR1, pyroglutamate formation found on at least Gln-58.

The protein resides in the secreted. This Homo sapiens (Human) protein is Basic salivary proline-rich protein 1 (PRB1).